Consider the following 286-residue polypeptide: Simplagrin (286 aa).

The signal sequence occupies residues 1–20 (MKKFCLIFLLLALTALHVKG). Positions 17–179 (HVKGSPIPDE…GSSSGGEESA (163 aa)) are disordered. Acidic residues-rich tracts occupy residues 24–69 (PDEE…DGQE) and 103–129 (VESG…TGGE). N-linked (GlcNAc...) asparagine glycosylation is present at asparagine 116. Low complexity predominate over residues 166–177 (SNRAGSSSGGEE).

It belongs to the aegyptin family. Monomeric in solution; likely has an elongated non-globular form. Interacts with human and rat collagens (via a RGQOGVMGF peptide, where O is hydroxyproline). Not glycosylated. As to expression, salivary gland.

It localises to the secreted. Inhibits host platelet aggregation induced by low concentrations of collagen via blocking the von Willebrand Factor (VWF) interaction with collagen. This Simulium nigrimanum (Black fly) protein is Simplagrin.